Here is a 642-residue protein sequence, read N- to C-terminus: Threonine--tRNA ligase (642 aa).

Residues 1 to 61 (MPIITLPDGS…SEDANLEIIT (61 aa)) form the TGS domain. The catalytic stretch occupies residues 243–534 (DHRKIGKALN…ITEEYAGFFP (292 aa)). The Zn(2+) site is built by Cys334, His385, and His511.

It belongs to the class-II aminoacyl-tRNA synthetase family. As to quaternary structure, homodimer. Zn(2+) is required as a cofactor.

Its subcellular location is the cytoplasm. It carries out the reaction tRNA(Thr) + L-threonine + ATP = L-threonyl-tRNA(Thr) + AMP + diphosphate + H(+). Catalyzes the attachment of threonine to tRNA(Thr) in a two-step reaction: L-threonine is first activated by ATP to form Thr-AMP and then transferred to the acceptor end of tRNA(Thr). Also edits incorrectly charged L-seryl-tRNA(Thr). This Histophilus somni (strain 2336) (Haemophilus somnus) protein is Threonine--tRNA ligase.